The sequence spans 270 residues: 5-amino-6-(5-phospho-D-ribitylamino)uracil phosphatase YitU (270 aa).

Aspartate 11 functions as the Nucleophile in the catalytic mechanism. Aspartate 11 is a Mg(2+) binding site. Leucine 12 provides a ligand contact to phosphate. Mg(2+) is bound at residue aspartate 13. Phosphate contacts are provided by residues 45 to 46 (TG) and lysine 197. A Mg(2+)-binding site is contributed by aspartate 220. Residue asparagine 223 participates in phosphate binding.

This sequence belongs to the HAD-like hydrolase superfamily. Cof family. The cofactor is Mg(2+).

The enzyme catalyses 5-amino-6-(5-phospho-D-ribitylamino)uracil + H2O = 5-amino-6-(D-ribitylamino)uracil + phosphate. It functions in the pathway cofactor biosynthesis; riboflavin biosynthesis; 5-amino-6-(D-ribitylamino)uracil from GTP: step 4/4. Functionally, catalyzes the dephosphorylation of the riboflavin precursor 5-amino-6-(5-phospho-D-ribitylamino)uracil and of flavin mononucleotide (FMN) in vitro. The chain is 5-amino-6-(5-phospho-D-ribitylamino)uracil phosphatase YitU (yitU) from Bacillus subtilis (strain 168).